The sequence spans 511 residues: Maturase K (511 aa).

The protein belongs to the intron maturase 2 family. MatK subfamily.

The protein resides in the plastid. It is found in the chloroplast. Its function is as follows. Usually encoded in the trnK tRNA gene intron. Probably assists in splicing its own and other chloroplast group II introns. The chain is Maturase K from Campsis radicans (Trumpet creeper).